The primary structure comprises 55 residues: ATP synthase F(0) complex subunit 8 (55 aa).

The chain crosses the membrane as a helical span at residues 8–24 (PWFSIMVMTWLTLALLI). The segment at 35 to 55 (NPPSKKPSLITKPTPWAWPWT) is disordered.

This sequence belongs to the ATPase protein 8 family. As to quaternary structure, component of the ATP synthase complex composed at least of ATP5F1A/subunit alpha, ATP5F1B/subunit beta, ATP5MC1/subunit c (homooctomer), MT-ATP6/subunit a, MT-ATP8/subunit 8, ATP5ME/subunit e, ATP5MF/subunit f, ATP5MG/subunit g, ATP5MK/subunit k, ATP5MJ/subunit j, ATP5F1C/subunit gamma, ATP5F1D/subunit delta, ATP5F1E/subunit epsilon, ATP5PF/subunit F6, ATP5PB/subunit b, ATP5PD/subunit d, ATP5PO/subunit OSCP. ATP synthase complex consists of a soluble F(1) head domain (subunits alpha(3) and beta(3)) - the catalytic core - and a membrane F(0) domain - the membrane proton channel (subunits c, a, 8, e, f, g, k and j). These two domains are linked by a central stalk (subunits gamma, delta, and epsilon) rotating inside the F1 region and a stationary peripheral stalk (subunits F6, b, d, and OSCP).

The protein resides in the mitochondrion membrane. In terms of biological role, subunit 8, of the mitochondrial membrane ATP synthase complex (F(1)F(0) ATP synthase or Complex V) that produces ATP from ADP in the presence of a proton gradient across the membrane which is generated by electron transport complexes of the respiratory chain. ATP synthase complex consist of a soluble F(1) head domain - the catalytic core - and a membrane F(1) domain - the membrane proton channel. These two domains are linked by a central stalk rotating inside the F(1) region and a stationary peripheral stalk. During catalysis, ATP synthesis in the catalytic domain of F(1) is coupled via a rotary mechanism of the central stalk subunits to proton translocation. In vivo, can only synthesize ATP although its ATP hydrolase activity can be activated artificially in vitro. Part of the complex F(0) domain. This Anas platyrhynchos (Mallard) protein is ATP synthase F(0) complex subunit 8.